Consider the following 137-residue polypeptide: Large ribosomal subunit protein uL16 (137 aa).

The protein belongs to the universal ribosomal protein uL16 family. As to quaternary structure, part of the 50S ribosomal subunit.

Functionally, binds 23S rRNA and is also seen to make contacts with the A and possibly P site tRNAs. This is Large ribosomal subunit protein uL16 from Spiroplasma citri.